The following is a 1494-amino-acid chain: Neuropathy target esterase sws (1494 aa).

Residues 1–35 (MDVLELLRVSGSNMYYSTFLADAWCYYISNQITMT) lie on the Lumenal side of the membrane. A helical transmembrane segment spans residues 36-56 (MYLYCALGVLSMLFIGWFVYF). The Cytoplasmic segment spans residues 57-1494 (KRLARLRLRH…NTNNETKNYL (1438 aa)). 176 to 303 (IFGHFEKPIF…IRVIQVIMIR (128 aa)) lines the a nucleoside 3',5'-cyclic phosphate pocket. Over residues 362–372 (ASGTAGSTHTA) the composition is skewed to low complexity. 2 disordered regions span residues 362-405 (ASGT…ELSG) and 422-452 (NSYP…QPEV). The segment covering 435-449 (GNLSTRRGSITQQEQ) has biased composition (polar residues). The residue at position 443 (Ser-443) is a Phosphoserine. A nucleoside 3',5'-cyclic phosphate-binding positions include 474–601 (ELGL…VVRR) and 590–717 (IVLD…LSHR). The PNPLA domain maps to 944–1110 (LVLGGGGARG…VNNLPGHLWR (167 aa)). The short motif at 948-953 (GGGARG) is the GXGXXG element. The GXSXG signature appears at 975-979 (GVSIG). Ser-977 (nucleophile) is an active-site residue. Asp-1097 (proton acceptor) is an active-site residue. The DGA/G motif lies at 1097 to 1099 (DGG). The tract at residues 1367–1494 (MDKATQSTPP…NTNNETKNYL (128 aa)) is disordered. Polar residues predominate over residues 1370-1381 (ATQSTPPLQSKA). Basic and acidic residues-rich tracts occupy residues 1389–1420 (SKEE…RELS) and 1452–1483 (MDKK…KENR). The segment covering 1484-1494 (SNTNNETKNYL) has biased composition (polar residues).

Belongs to the NTE family. As to quaternary structure, interacts with Pka-C3; interaction inhibits the catalytic function of Pka-C3 and the esterase activity of sws.

The protein resides in the endoplasmic reticulum membrane. It carries out the reaction a 1-acyl-sn-glycero-3-phosphocholine + H2O = sn-glycerol 3-phosphocholine + a fatty acid + H(+). Phospholipase B that deacylates intracellular phosphatidylcholine (PtdCho), generating glycerophosphocholine (GroPtdCho). This deacylation occurs at both sn-2 and sn-1 positions of PtdCho. Its specific chemical modification by certain organophosphorus (OP) compounds leads to distal axonopathy. Plays a role in the signaling mechanism between neurons and glia that regulates glia wrapping during development of the adult brain. Essential for membrane lipid homeostasis and cell survival in both neurons and glia of the adult brain. This chain is Neuropathy target esterase sws, found in Drosophila pseudoobscura pseudoobscura (Fruit fly).